A 597-amino-acid polypeptide reads, in one-letter code: tRNA uridine 5-carboxymethylaminomethyl modification enzyme MnmG (597 aa).

11-16 serves as a coordination point for FAD; the sequence is GAGHAG. 275-289 serves as a coordination point for NAD(+); the sequence is SPRYCPSIEEKIERY.

Belongs to the MnmG family. In terms of assembly, homodimer. Heterotetramer of two MnmE and two MnmG subunits. The cofactor is FAD.

It is found in the cytoplasm. Functionally, NAD-binding protein involved in the addition of a carboxymethylaminomethyl (cmnm) group at the wobble position (U34) of certain tRNAs, forming tRNA-cmnm(5)s(2)U34. This Endomicrobium trichonymphae protein is tRNA uridine 5-carboxymethylaminomethyl modification enzyme MnmG.